A 470-amino-acid chain; its full sequence is Light-independent protochlorophyllide reductase subunit N (470 aa).

Residues cysteine 22, cysteine 47, and cysteine 107 each contribute to the [4Fe-4S] cluster site.

This sequence belongs to the BchN/ChlN family. In terms of assembly, protochlorophyllide reductase is composed of three subunits; ChlL, ChlN and ChlB. Forms a heterotetramer of two ChlB and two ChlN subunits. Requires [4Fe-4S] cluster as cofactor.

It localises to the plastid. The protein localises to the chloroplast. It catalyses the reaction chlorophyllide a + oxidized 2[4Fe-4S]-[ferredoxin] + 2 ADP + 2 phosphate = protochlorophyllide a + reduced 2[4Fe-4S]-[ferredoxin] + 2 ATP + 2 H2O. Its pathway is porphyrin-containing compound metabolism; chlorophyll biosynthesis (light-independent). Its function is as follows. Component of the dark-operative protochlorophyllide reductase (DPOR) that uses Mg-ATP and reduced ferredoxin to reduce ring D of protochlorophyllide (Pchlide) to form chlorophyllide a (Chlide). This reaction is light-independent. The NB-protein (ChlN-ChlB) is the catalytic component of the complex. The polypeptide is Light-independent protochlorophyllide reductase subunit N (Pinus koraiensis (Korean pine)).